Here is a 339-residue protein sequence, read N- to C-terminus: Anthranilate phosphoribosyltransferase (339 aa).

5-phospho-alpha-D-ribose 1-diphosphate is bound by residues Gly86, 89-90, Thr94, 96-99, 114-122, and Ser126; these read GD, NIST, and KHGNRGVSS. Anthranilate is bound at residue Gly86. Ser98 serves as a coordination point for Mg(2+). Asn117 lines the anthranilate pocket. Arg172 is an anthranilate binding site. Mg(2+)-binding residues include Asp230 and Glu231.

It belongs to the anthranilate phosphoribosyltransferase family. In terms of assembly, homodimer. The cofactor is Mg(2+).

The enzyme catalyses N-(5-phospho-beta-D-ribosyl)anthranilate + diphosphate = 5-phospho-alpha-D-ribose 1-diphosphate + anthranilate. The protein operates within amino-acid biosynthesis; L-tryptophan biosynthesis; L-tryptophan from chorismate: step 2/5. In terms of biological role, catalyzes the transfer of the phosphoribosyl group of 5-phosphorylribose-1-pyrophosphate (PRPP) to anthranilate to yield N-(5'-phosphoribosyl)-anthranilate (PRA). This chain is Anthranilate phosphoribosyltransferase, found in Photobacterium profundum (strain SS9).